The sequence spans 2485 residues: Probable polyketide synthase 10 (2485 aa).

Residues 8–447 enclose the Ketosynthase family 3 (KS3) domain; sequence EDDIAIIGVG…GANCCIILSE (440 aa). Residues cysteine 184, histidine 325, and histidine 363 each act as for beta-ketoacyl synthase activity in the active site. Positions 636-669 are acyl/malonyl transferase; it reads GIEASFIVGHSLGEISAAHCSGMIDLETLCYIIY. The For acyl/malonyl transferase activity role is filled by serine 646. The interval 930–1054 is N-terminal hotdog fold; sequence PPITILGNES…GNFHISNNLF (125 aa). Residues 930–1220 form the PKS/mFAS DH domain; the sequence is PPITILGNES…SKSLTPIQDP (291 aa). The active-site Proton acceptor; for dehydratase activity is histidine 964. Residues 1071 to 1220 are C-terminal hotdog fold; the sequence is NYSLIERDDL…SKSLTPIQDP (150 aa). The active-site Proton donor; for dehydratase activity is the aspartate 1134. The Carrier domain occupies 2410-2485; the sequence is ESNKGIDGLL…NQLIKFLNKK (76 aa). Residue serine 2447 is modified to O-(pantetheine 4'-phosphoryl)serine.

It depends on pantetheine 4'-phosphate as a cofactor.

Functionally, probable polyketide synthase. This chain is Probable polyketide synthase 10 (pks10), found in Dictyostelium discoideum (Social amoeba).